The primary structure comprises 244 residues: Carbonyl reductase [NADPH] 2 (244 aa).

11 to 39 (LVTGAGKGIGRDTVKALHASGAKVVAVTR) is a binding site for NADP(+). At Ser42 the chain carries Phosphoserine. Residue Ser136 coordinates substrate. The active-site Proton acceptor is Tyr149. Phosphoserine is present on Ser176.

It belongs to the short-chain dehydrogenases/reductases (SDR) family. As to quaternary structure, homotetramer. As to expression, predominantly expressed in lung, in ciliated cells, non-ciliated bronchiolar cells and type-II alveolar pneumocytes. Also detected in adipose tissue (at protein level). Low expression in testis, heart, kidney, spleen, brain and liver.

It localises to the mitochondrion matrix. The enzyme catalyses a secondary alcohol + NADP(+) = a ketone + NADPH + H(+). In terms of biological role, may function in the pulmonary metabolism of endogenous carbonyl compounds, such as aliphatic aldehydes and ketones derived from lipid peroxidation, 3-ketosteroids and fatty aldehydes, as well as in xenobiotic metabolism. In Mus musculus (Mouse), this protein is Carbonyl reductase [NADPH] 2 (Cbr2).